A 166-amino-acid polypeptide reads, in one-letter code: MAIKLEDKKAIVAEVNEAAKAGLSAVVADARGVTVGAMTGLRKEAREAGVYVRVVRNTLLKRAVADTEFSVLNDVFTGPTLIAFSNEHPGAAARLFKEFAKGQDKFEIKAAAFEGKFLAANQIDVLASLPTRNEAISQLMSVIQGATSKLARTLAAVRDQKEAAAA.

This sequence belongs to the universal ribosomal protein uL10 family. Part of the ribosomal stalk of the 50S ribosomal subunit. The N-terminus interacts with L11 and the large rRNA to form the base of the stalk. The C-terminus forms an elongated spine to which L12 dimers bind in a sequential fashion forming a multimeric L10(L12)X complex.

Functionally, forms part of the ribosomal stalk, playing a central role in the interaction of the ribosome with GTP-bound translation factors. The polypeptide is Large ribosomal subunit protein uL10 (Pseudomonas syringae pv. syringae (strain B728a)).